Consider the following 534-residue polypeptide: Glucans biosynthesis protein D (534 aa).

The tat-type signal signal peptide spans 1-30 (MRMQRRHLLKNAAAALAALGLPALPQWALA).

Belongs to the OpgD/OpgG family. In terms of processing, predicted to be exported by the Tat system. The position of the signal peptide cleavage has not been experimentally proven.

It is found in the periplasm. The protein operates within glycan metabolism; osmoregulated periplasmic glucan (OPG) biosynthesis. Probably involved in the control of the structural glucose backbone of osmoregulated periplasmic glucans (OPGs). In Xanthomonas oryzae pv. oryzae (strain KACC10331 / KXO85), this protein is Glucans biosynthesis protein D.